The primary structure comprises 58 residues: Large ribosomal subunit protein bL32c (58 aa).

The protein belongs to the bacterial ribosomal protein bL32 family.

It is found in the plastid. The protein localises to the chloroplast. This Adiantum capillus-veneris (Maidenhair fern) protein is Large ribosomal subunit protein bL32c (rpl32).